Consider the following 596-residue polypeptide: Invasin CotH7 (596 aa).

The N-terminal stretch at 1 to 17 (MKSLSFISLACLTAVHA) is a signal peptide. N-linked (GlcNAc...) asparagine glycans are attached at residues N82, N146, N163, N169, N288, N440, and N544. Residues 528–544 (SATIAAPATSESASQDN) show a composition bias toward low complexity. Positions 528-557 (SATIAAPATSESASQDNTSDDTDSASTSSS) are disordered. A lipid anchor (GPI-anchor amidated serine) is attached at S567. A propeptide spans 568–596 (SASKSAPTFYCLQLVLYLSLSFKNLYKYI) (removed in mature form).

In terms of assembly, interacts with host integrin beta-1 ITGB1 on the cell surface of host alveolar epithelial cells.

It is found in the cell membrane. Promotes invasion of host epithelial cells by adhering to receptors on the host cell surface to facilitate endocytosis of the pathogen into host cells. Probably binds integrin ITGA3:ITGB1 via ITGB1, on the cell surface of host alveolar epithelial cells. The polypeptide is Invasin CotH7 (Rhizopus delemar (strain RA 99-880 / ATCC MYA-4621 / FGSC 9543 / NRRL 43880) (Mucormycosis agent)).